The primary structure comprises 412 residues: Poly-beta-1,6-N-acetyl-D-glucosamine synthase (412 aa).

4 helical membrane-spanning segments follow: residues 7-28 (LLFY…YFFI), 298-320 (IASI…TANI), 332-354 (IFFF…ALFI), and 364-386 (VGLI…VVIM).

This sequence belongs to the glycosyltransferase 2 family.

The protein localises to the cell membrane. In terms of biological role, N-acetylglucosaminyltransferase that catalyzes the polymerization of single monomer units of UDP-N-acetylglucosamine to produce the linear homomer poly-beta-1,6-N-acetyl-D-glucosamine (PNAG, also referred to as PIA), a biofilm adhesin polysaccharide. Requires IcaD for full activity. In Staphylococcus epidermidis (strain ATCC 35984 / DSM 28319 / BCRC 17069 / CCUG 31568 / BM 3577 / RP62A), this protein is Poly-beta-1,6-N-acetyl-D-glucosamine synthase (icaA).